Here is an 820-residue protein sequence, read N- to C-terminus: Leucine-rich repeat and guanylate kinase domain-containing protein (820 aa).

Positions 72 to 83 (EAEAEQEEKQQE) are enriched in basic and acidic residues. The segment at 72-96 (EAEAEQEEKQQEDGESEESEESEMQ) is disordered. Over residues 84 to 94 (DGESEESEESE) the composition is skewed to acidic residues. LRR repeat units follow at residues 129–149 (YLNLNLSHCELVDISILCGYV), 150–171 (HLQKLNLSGNRIEDLSCVSCMP), 172–193 (YLLELNASQNKLTTFFNFKPPQ), 194–215 (NLKKVDFSSNLISEMYDLSAYH), 216–237 (TLTQLILDNNEIEEITGLENCI), 238–259 (SLTHLSLAGNKITTIKGLGTLP), 260–280 (IKVLSLSNNMIETITGLEELK), 281–302 (ALQNLDLSHNQISSLQGLENHD), and 303–324 (LLEVINLEDNKIKELSEIEYIE). The 39-residue stretch at 337–375 (NPIQTKPEYWFFVIYMLLRLTELDQQKIKVEEKVFAVNK) folds into the LRRCT domain. The Guanylate kinase-like domain occupies 414–597 (YPMLILTGPA…AYQKLSELIR (184 aa)). 421-428 (GPAACGKR) lines the ATP pocket. The segment at 800–820 (TIMDPGSNTKPTLPPIPHGRR) is disordered. A compositionally biased stretch (pro residues) spans 811 to 820 (TLPPIPHGRR).

In terms of assembly, interacts (via guanylate kinase-like domain) with RIMBP3 (via coiled-coil region). Interacts (via guanylate kinase-like domain) with HOOK2. Interacts (via LRRCT domain) with KLC3. Interacts with HOOK1 and HOOK3. Highly expressed in the testis. During spermatid development is initially localized to a supra-nuclear region of round spermatids, and is particularly evident at the leading edge of the developing acrosome and acroplaxome. As maturation proceeded and nuclear elongation initiated, LRGUK moves distally to ultimately reside on the microtubules of the manchette. LRGUK is also evident in the sperm basal body and the sperm tail.

The protein localises to the cytoplasmic vesicle. It is found in the secretory vesicle. It localises to the acrosome. Its subcellular location is the cytoplasm. The protein resides in the cytoskeleton. The protein localises to the cilium basal body. Involved in multiple aspects of sperm assembly including acrosome attachment, shaping of the sperm head and in the early aspects of axoneme development. Not essential for primary cilium biogenesis. The polypeptide is Leucine-rich repeat and guanylate kinase domain-containing protein (Lrguk) (Mus musculus (Mouse)).